We begin with the raw amino-acid sequence, 534 residues long: Serine protease vicPa (534 aa).

The signal sequence occupies residues M1–G17. N-linked (GlcNAc...) asparagine glycosylation is found at N65 and N126. S174 (charge relay system) is an active-site residue. 3 N-linked (GlcNAc...) asparagine glycosylation sites follow: N297, N416, and N436. The Charge relay system role is filled by D450.

The protein belongs to the peptidase S28 family.

Its pathway is mycotoxin biosynthesis. Serine protease, part of the gene cluster that mediates the biosynthesis of the secondary metabolite victorin, the molecular basis for Victoria blight of oats. Within the pathway, vicPa and vicPb are probably involved in the processing of the vicA1 and vicA2 precursors. The pathway starts with the processing of the precursor vicA1 by several endopeptidases including kexin proteases as well as the cluster-specific S28 family peptidases vicPa and vicPb to produce 7 identical copies of the hexapeptide Gly-Leu-Lys-Leu-Ala-Phe. After being excised from the precursor peptide, the core peptides are cyclized and modified post-translationally by enzymes encoded within the gene cluster. The ustYa family oxidase vicYb is required for the formation of the macrocycle in victorin and the copper amine oxidases (CAOs) vicK1 and vicK2 are responsible for converting victorin to the active form by oxidizing the N-terminal glycyl residue in the peptides to glyoxylate. Relaxed substrate specificity of enzymes in the victorin biosynthetic pathway results in a metabolic grid that produces a set of analogs including victorinines B, C, E or HV-toxin M. The chain is Serine protease vicPa from Bipolaris victoriae (strain FI3) (Victoria blight of oats agent).